The chain runs to 189 residues: Protein shisa-like-2A (189 aa).

The next 2 helical transmembrane spans lie at 48 to 68 and 70 to 90; these read SFFP…LVGL and TAAV…YLFI. Residues 98-189 are disordered; that stretch reads LDPGLSLQTT…PTPGPHGPVP (92 aa). The span at 140 to 171 shows a compositional bias: polar residues; the sequence is NTHLESNKKQTVSPTCLPQNQFMATVTASNIP.

The protein belongs to the shisa family.

It localises to the membrane. This chain is Protein shisa-like-2A (Shisal2a), found in Mus musculus (Mouse).